Consider the following 243-residue polypeptide: Pleckstrin homology domain-containing family B member 1 (243 aa).

The region spanning 21 to 128 (ALVRGGWLWR…WKTALLEANS (108 aa)) is the PH domain.

As to quaternary structure, homodimer. Interacts (via PH domain) with MYO1C. Interacts (via PH domain) with MYO7A. Binds transducins. Highly expressed in retina and brain. Levels are very low or not detectable in all other tissues tested.

The protein resides in the membrane. The protein localises to the cytoplasm. The sequence is that of Pleckstrin homology domain-containing family B member 1 (PLEKHB1) from Homo sapiens (Human).